Here is a 192-residue protein sequence, read N- to C-terminus: Photosystem I assembly protein Ycf4 (192 aa).

A run of 2 helical transmembrane segments spans residues 30 to 52 (YFWA…SSYL) and 72 to 94 (IAIG…AIAW).

It belongs to the Ycf4 family.

It localises to the cellular thylakoid membrane. Its function is as follows. Seems to be required for the assembly of the photosystem I complex. The polypeptide is Photosystem I assembly protein Ycf4 (Thermosynechococcus vestitus (strain NIES-2133 / IAM M-273 / BP-1)).